A 954-amino-acid chain; its full sequence is Lysine-specific demethylase JMJ14 (954 aa).

The tract at residues 1 to 46 (MDQLASLAESVAMEEDSEKQSIKGESSLEPDSTPSSPKITARWNPS) is disordered. Polar residues predominate over residues 29-38 (EPDSTPSSPK). Residues 56–97 (APIFYPTNEDFDDPLGYIEKLRSKAESYGICRIVPPVAWRPP) enclose the JmjN domain. The Nuclear localization signal 1 motif lies at 136–143 (RKRRRISK). The tract at residues 148–170 (RRKRDSGCDTASSGSSDSEGKFG) is disordered. A JmjC domain is found at 263–429 (QYSQCGWNLN…HGQNAVEGYS (167 aa)). Fe cation-binding residues include H309, E311, and H397. The Nuclear localization signal 2 motif lies at 470 to 477 (WKRVCSED). Zn(2+) contacts are provided by C519, C522, C533, C535, C542, H545, C550, and C552. Residues 519 to 571 (CFLCFYDLHMSASSCKCSPNRFACLIHAKDLCSCESKDRYILIRHTLDELWAL) form a C5HC2 zinc finger. Positions 641 to 670 (SNKEVQLKQDGDSDVNRHGHESERNHVHGI) are disordered. The segment covering 645–670 (VQLKQDGDSDVNRHGHESERNHVHGI) has biased composition (basic and acidic residues). Residues 726–784 (ATNRLSLSVELLSSGSLVVKKLWCSKQAIYPKGFKSRVKFLSVLDPTNLTNYISEVLDA) enclose the FYR N-terminal domain. In terms of domain architecture, FYR C-terminal spans 786–876 (LLGPLFRVSV…HQLEEYWNQK (91 aa)). The interval 884–905 (EPIKEGEKDDTEKGGASDPSLD) is disordered. The span at 885–905 (PIKEGEKDDTEKGGASDPSLD) shows a compositional bias: basic and acidic residues.

It belongs to the JARID1 histone demethylase family. In terms of assembly, interacts with NAC050 and NAC051/NAC052. Interacts with THAL in the nucleus. Fe(2+) serves as cofactor. In terms of tissue distribution, expressed in shoot apex, primary root tip, trichomes of young leaves, leaf vascular tissues, anther filaments and styles. Detected in inflorescences, leaves, stems, roots and siliques. Mostly expressed in floral organs, and, at low levels, in other organs.

Its subcellular location is the nucleus. The protein localises to the nucleoplasm. It carries out the reaction N(6),N(6),N(6)-trimethyl-L-lysyl(4)-[histone H3] + 2-oxoglutarate + O2 = N(6),N(6)-dimethyl-L-lysyl(4)-[histone H3] + formaldehyde + succinate + CO2. The enzyme catalyses N(6),N(6)-dimethyl-L-lysyl(4)-[histone H3] + 2-oxoglutarate + O2 = N(6)-methyl-L-lysyl(4)-[histone H3] + formaldehyde + succinate + CO2. The catalysed reaction is N(6)-methyl-L-lysyl(4)-[histone H3] + 2-oxoglutarate + O2 = L-lysyl(4)-[histone H3] + formaldehyde + succinate + CO2. It catalyses the reaction N(6),N(6),N(6)-trimethyl-L-lysyl(4)-[histone H3] + 3 2-oxoglutarate + 3 O2 = L-lysyl(4)-[histone H3] + 3 formaldehyde + 3 succinate + 3 CO2. Its function is as follows. Transcriptional repressor. Histone demethylase that demethylates 'Lys-4' (H3K4me) of histone H3 with a higher activity for H3K4me3 and H3K4me2 than H3K4me1. No activity on H3K9me3/2, H3K36me3/2 and H3K27me3/2. Function as a nocturne 'eraser' to counteract the diurnal 'writer' methylase activity of ATXR3/SDG2 thus orchestrating the circadian rhythm of histone modifications (e.g. H3K4me3) and modulating the rhythmic expression of diurnal target genes; this mechanism also relies on the circadian clock oscillators CCA1 and LHY. Involved in a negative regulation of root meristem growth upon suboptimal root growth conditions. Represses FT and TSF expression to inhibit the floral transition. Binds around the transcription start site of the FT locus. Involved in the DRM2-mediated maintenance of DNA methylation, but not required for the de novo DNA methylation. Required for demethylating histone H3K4me3 at the target of RNA silencing. Counteracts the DNA methylation of expressed transgenes; specific attenuation of transgene DNA methylation enhances the production of aberrant RNAs (e.g. uncapped and antisense) that readily induce systemic RDR6-dependent post-transcriptional transgene silencing (PTGS) spreading. Together with NAC051/NAC052 and NAC050, regulates gene expression and flowering time, probably by the promotion of RNA-mediated gene silencing. Together with JMJ16 and JMJ17, required for plant growth and development. Promotes local and systemic immunity (especially toward the bacterial pathogen Pseudomonas syringae Pst DC3000 avrRpt2) by regulating positively pathogen-induced H3K4me3 enrichment and expression of defense genes involved in salicylic acid (SA)- and pipecolic acid (Pip)-mediated defense pathways (e.g. PR1, FMO1, ALD1 and SARD4). This is Lysine-specific demethylase JMJ14 from Arabidopsis thaliana (Mouse-ear cress).